The sequence spans 274 residues: Outer surface protein A (274 aa).

The N-terminal stretch at Met-1–Ala-16 is a signal peptide. Cys-17 carries the N-palmitoyl cysteine lipid modification. Cys-17 carries S-diacylglycerol cysteine lipidation.

The protein belongs to the OspA lipoprotein family.

The protein resides in the cell outer membrane. Its subcellular location is the cell surface. This Borreliella burgdorferi (Lyme disease spirochete) protein is Outer surface protein A.